Consider the following 430-residue polypeptide: Adenylosuccinate synthetase (430 aa).

GTP-binding positions include 12–18 and 40–42; these read GDEGKGK and GHT. The active-site Proton acceptor is the D13. The Mg(2+) site is built by D13 and G40. Residues 13 to 16, 38 to 41, T130, R144, Q224, T239, and R303 each bind IMP; these read DEGK and NAGH. H41 serves as the catalytic Proton donor. A substrate-binding site is contributed by 299 to 305; the sequence is VVTGRPR. GTP is bound by residues R305, 331–333, and 413–415; these read KLD and STS.

The protein belongs to the adenylosuccinate synthetase family. In terms of assembly, homodimer. Mg(2+) serves as cofactor.

It is found in the cytoplasm. The enzyme catalyses IMP + L-aspartate + GTP = N(6)-(1,2-dicarboxyethyl)-AMP + GDP + phosphate + 2 H(+). The protein operates within purine metabolism; AMP biosynthesis via de novo pathway; AMP from IMP: step 1/2. In terms of biological role, plays an important role in the de novo pathway of purine nucleotide biosynthesis. Catalyzes the first committed step in the biosynthesis of AMP from IMP. The protein is Adenylosuccinate synthetase of Azorhizobium caulinodans (strain ATCC 43989 / DSM 5975 / JCM 20966 / LMG 6465 / NBRC 14845 / NCIMB 13405 / ORS 571).